The sequence spans 1028 residues: Pro-apoptotic serine protease nma111 (1028 aa).

The interval 1-46 is disordered; that stretch reads MDLNGETSTKRKRSSVAAPAERPAKHLKPGNSTLTPGDATPANGTV. The segment at 82 to 266 is serine protease; it reads VVSIHFCQTC…AATDYFLPLD (185 aa). Residues histidine 120, aspartate 151, and serine 233 each act as charge relay system in the active site. PDZ domains follow at residues 289 to 374 and 876 to 957; these read QWIL…LLVQ and VFCG…VTFD. The span at 991-1001 shows a compositional bias: basic and acidic residues; that stretch reads SHERDRHKDGI. The interval 991 to 1028 is disordered; it reads SHERDRHKDGITPDAANLNPDAMDEVYEEVSDVEPEVD. Residues 1012 to 1028 are compositionally biased toward acidic residues; the sequence is AMDEVYEEVSDVEPEVD.

The protein belongs to the peptidase S1C family.

It localises to the nucleus. Nuclear serine protease which mediates apoptosis. This Aspergillus fumigatus (strain ATCC MYA-4609 / CBS 101355 / FGSC A1100 / Af293) (Neosartorya fumigata) protein is Pro-apoptotic serine protease nma111 (nma111).